The primary structure comprises 160 residues: Large ribosomal subunit protein uL16 (160 aa).

The interval 138–160 (KNLENSSQENTKDSKKSQEEVKQ) is disordered. Positions 147-160 (NTKDSKKSQEEVKQ) are enriched in basic and acidic residues.

Belongs to the universal ribosomal protein uL16 family. In terms of assembly, part of the 50S ribosomal subunit.

Functionally, binds 23S rRNA and is also seen to make contacts with the A and possibly P site tRNAs. The polypeptide is Large ribosomal subunit protein uL16 (Prochlorococcus marinus (strain AS9601)).